The primary structure comprises 447 residues: uncharacterized protein (447 aa).

A run of 2 helical transmembrane segments spans residues 380-400 and 412-432; these read VLEI…LLLT and ILGF…GVYV.

Its subcellular location is the cell membrane. This is an uncharacterized protein from Methanocaldococcus jannaschii (strain ATCC 43067 / DSM 2661 / JAL-1 / JCM 10045 / NBRC 100440) (Methanococcus jannaschii).